The sequence spans 138 residues: Putative pre-16S rRNA nuclease (138 aa).

It belongs to the YqgF nuclease family.

Its subcellular location is the cytoplasm. In terms of biological role, could be a nuclease involved in processing of the 5'-end of pre-16S rRNA. The chain is Putative pre-16S rRNA nuclease from Bacillus pumilus (strain SAFR-032).